A 519-amino-acid chain; its full sequence is Glutamate--cysteine ligase (519 aa).

This sequence belongs to the glutamate--cysteine ligase type 1 family. Type 1 subfamily.

It catalyses the reaction L-cysteine + L-glutamate + ATP = gamma-L-glutamyl-L-cysteine + ADP + phosphate + H(+). The protein operates within sulfur metabolism; glutathione biosynthesis; glutathione from L-cysteine and L-glutamate: step 1/2. The polypeptide is Glutamate--cysteine ligase (Erwinia tasmaniensis (strain DSM 17950 / CFBP 7177 / CIP 109463 / NCPPB 4357 / Et1/99)).